The primary structure comprises 995 residues: Polynucleotide 5'-hydroxyl-kinase NOL9 (995 aa).

Disordered regions lie at residues 18–173 (EQRE…SSMK) and 271–359 (IKVF…YEPP). Composition is skewed to low complexity over residues 75–94 (TAGA…SSPS) and 110–129 (VNKS…KSAK). Over residues 279–354 (EETDSDEDDI…DIFDTDDLDS (76 aa)) the composition is skewed to acidic residues. 639–646 (GGKGVGKS) provides a ligand contact to ATP.

Belongs to the Clp1 family. NOL9/GRC3 subfamily.

The protein resides in the nucleus. The protein localises to the nucleolus. Functionally, polynucleotide 5'-kinase involved in rRNA processing. This is Polynucleotide 5'-hydroxyl-kinase NOL9 from Drosophila melanogaster (Fruit fly).